A 270-amino-acid chain; its full sequence is Type III pantothenate kinase (270 aa).

An ATP-binding site is contributed by 11-18 (DAGNSRIK). Substrate contacts are provided by residues Tyr96 and 103–106 (GSDR). The active-site Proton acceptor is the Asp105. Thr129 is an ATP binding site. Thr195 contributes to the substrate binding site.

The protein belongs to the type III pantothenate kinase family. As to quaternary structure, homodimer. NH4(+) is required as a cofactor. The cofactor is K(+).

It localises to the cytoplasm. It catalyses the reaction (R)-pantothenate + ATP = (R)-4'-phosphopantothenate + ADP + H(+). It functions in the pathway cofactor biosynthesis; coenzyme A biosynthesis; CoA from (R)-pantothenate: step 1/5. Its function is as follows. Catalyzes the phosphorylation of pantothenate (Pan), the first step in CoA biosynthesis. The chain is Type III pantothenate kinase from Paraburkholderia phytofirmans (strain DSM 17436 / LMG 22146 / PsJN) (Burkholderia phytofirmans).